The chain runs to 378 residues: TelA-like protein SAUSA300_1299 (378 aa).

This sequence belongs to the TelA family.

In Staphylococcus aureus (strain USA300), this protein is TelA-like protein SAUSA300_1299.